The sequence spans 622 residues: Low affinity potassium transport system protein Kup (622 aa).

12 helical membrane-spanning segments follow: residues 9–29 (LSAV…TSPL), 46–66 (PDVV…VVSV), 101–121 (ILVV…VITP), 137–157 (PALD…LFVI), 165–185 (VGKL…LLGL), 213–233 (VSFF…ALYA), 247–267 (WFTV…ALLL), 276–296 (PFFL…ATLA), 337–357 (IYIP…IIGF), 363–383 (LAAA…ILFC), 395–415 (FLVA…FSAN), and 416–436 (VLKL…MFII).

Belongs to the HAK/KUP transporter (TC 2.A.72) family.

Its subcellular location is the cell inner membrane. It carries out the reaction K(+)(in) + H(+)(in) = K(+)(out) + H(+)(out). Responsible for the low-affinity transport of potassium into the cell. Likely operates as a K(+):H(+) symporter. In Yersinia pseudotuberculosis serotype O:1b (strain IP 31758), this protein is Low affinity potassium transport system protein Kup.